Here is a 267-residue protein sequence, read N- to C-terminus: tRNA pseudouridine synthase A (267 aa).

Residue Asp-51 is the Nucleophile of the active site. Substrate is bound at residue Tyr-109.

This sequence belongs to the tRNA pseudouridine synthase TruA family. Homodimer.

It carries out the reaction uridine(38/39/40) in tRNA = pseudouridine(38/39/40) in tRNA. Functionally, formation of pseudouridine at positions 38, 39 and 40 in the anticodon stem and loop of transfer RNAs. The polypeptide is tRNA pseudouridine synthase A (Staphylococcus aureus (strain Mu3 / ATCC 700698)).